The primary structure comprises 135 residues: Biglycan (135 aa).

LRR repeat units lie at residues 4–24, 25–46, 49–72, 73–95, and 96–117; these read KLNYLRISEAKLTGIPKDLPE, TLNELHLDHNKIQAIELEDLLR, KLYRLGLGHNQIRMIENGSLSFLP, TLRELHLDNNKLSRVPAGLPDLK, and LLQVVYLHSNNITKVGVNDFCP. Asn65 carries an N-linked (GlcNAc...) asparagine glycan. Asn106 is a glycosylation site (N-linked (GlcNAc...) asparagine).

It belongs to the small leucine-rich proteoglycan (SLRP) family. SLRP class I subfamily. As to quaternary structure, homodimer. Forms a ternary complex with MFAP2 and ELN. In terms of processing, the two attached glycosaminoglycan chains can be either chondroitin sulfate or dermatan sulfate. In terms of tissue distribution, found in several connective tissues, especially in articular cartilages.

The protein localises to the secreted. The protein resides in the extracellular space. Its subcellular location is the extracellular matrix. Functionally, may be involved in collagen fiber assembly. In Oryctolagus cuniculus (Rabbit), this protein is Biglycan (BGN).